We begin with the raw amino-acid sequence, 346 residues long: Tryptophan--tRNA ligase (346 aa).

Residues 11 to 13 and 19 to 20 contribute to the ATP site; these read RPT and GH. The short motif at 12–20 is the 'HIGH' region element; the sequence is PTGKLHLGH. Asp-143 lines the L-tryptophan pocket. Residues 155-157, Leu-193, and 201-205 contribute to the ATP site; these read GKD and KMSKS. Positions 201–205 match the 'KMSKS' region motif; it reads KMSKS.

Belongs to the class-I aminoacyl-tRNA synthetase family. Homodimer.

The protein resides in the cytoplasm. The enzyme catalyses tRNA(Trp) + L-tryptophan + ATP = L-tryptophyl-tRNA(Trp) + AMP + diphosphate + H(+). In terms of biological role, catalyzes the attachment of tryptophan to tRNA(Trp). The sequence is that of Tryptophan--tRNA ligase from Chlamydia muridarum (strain MoPn / Nigg).